Here is an 85-residue protein sequence, read N- to C-terminus: Toxin To6 (85 aa).

A signal peptide spans 1–20; that stretch reads MSIFPIILALLLIGLDEGEA. Residues 21–83 enclose the LCN-type CS-alpha/beta domain; the sequence is LDGYPLSKNN…EMYPGRLPCN (63 aa). Disulfide bonds link Cys-32–Cys-82, Cys-36–Cys-59, Cys-42–Cys-64, and Cys-46–Cys-66.

Expressed by the venom gland.

The protein resides in the secreted. In terms of biological role, beta toxins bind voltage-independently at site-4 of sodium channels (Nav) and shift the voltage of activation toward more negative potentials thereby affecting sodium channel activation and promoting spontaneous and repetitive firing. This chain is Toxin To6, found in Tityus obscurus (Amazonian scorpion).